A 401-amino-acid polypeptide reads, in one-letter code: Solute carrier family 22 member 17 (401 aa).

10 helical membrane passes run 10–30 (GIVL…AAAG), 35–55 (IMAL…GVYL), 69–89 (VALA…GLAL), 100–120 (MITA…FLES), 184–203 (NIWK…HAIR), 218–238 (FYLC…FLGV), 247–267 (GILL…LGLW), 277–297 (TFSV…TLLA), 309–329 (GLGL…AQRL), and 336–356 (FLQH…IMLL).

This sequence belongs to the major facilitator (TC 2.A.1) superfamily. Organic cation transporter (TC 2.A.1.19) family. In terms of tissue distribution, widely expressed.

It is found in the cell membrane. The protein localises to the vacuole membrane. Functionally, cell surface receptor for LCN2 (24p3) that plays a key role in iron homeostasis and transport. Able to bind iron-bound LCN2 (holo-24p3), followed by internalization of holo-24p3 and release of iron, thereby increasing intracellular iron concentration and leading to inhibition of apoptosis. Also binds iron-free LCN2 (apo-24p3), followed by internalization of apo-24p3 and its association with an intracellular siderophore, leading to iron chelation and iron transfer to the extracellular medium, thereby reducing intracellular iron concentration and resulting in apoptosis. In Mus musculus (Mouse), this protein is Solute carrier family 22 member 17 (Slc22a17).